The chain runs to 151 residues: Extracellular globin-4 (151 aa).

Positions 6–151 (CCSYEDRREI…LVARIAKDLP (146 aa)) constitute a Globin domain. C7 and C138 are disulfide-bonded. H101 is a binding site for heme b.

The protein belongs to the globin family. In terms of assembly, the extracellular hemoglobin of the earthworm consists of 12 subunits that have a hexagonal bilayer structure with a molecular weight near 3.8 million. Each one-twelfth subunit is composed primarily of disulfide linked trimers (chains A, B, and C) and monomers (chain D).

It is found in the secreted. The protein is Extracellular globin-4 of Lumbricus terrestris (Common earthworm).